The primary structure comprises 547 residues: Chaperonin GroEL (547 aa).

Residues T30 to P33, K51, D87 to T91, G415, and D496 contribute to the ATP site.

Belongs to the chaperonin (HSP60) family. In terms of assembly, forms a cylinder of 14 subunits composed of two heptameric rings stacked back-to-back. Interacts with the co-chaperonin GroES.

The protein localises to the cytoplasm. It catalyses the reaction ATP + H2O + a folded polypeptide = ADP + phosphate + an unfolded polypeptide.. Together with its co-chaperonin GroES, plays an essential role in assisting protein folding. The GroEL-GroES system forms a nano-cage that allows encapsulation of the non-native substrate proteins and provides a physical environment optimized to promote and accelerate protein folding. This chain is Chaperonin GroEL, found in Chlorobium phaeobacteroides (strain DSM 266 / SMG 266 / 2430).